The primary structure comprises 188 residues: MKISANSIRTGNILVYNNDLWVVSKQPEHTQPGKGGAYVQVEMKNLKTGTKRNERFSSSDHLEKAELEQKDYQFLYFEDNNIVLMDNQTFEQISVNKEILDEKLPFLTENMIVKVEFYNEKPLSIELPATVILEIIETDPVIKGATATASYKPATLANGVKVKVPQYLEIGEKIVVKTEDLTYVERSK.

Belongs to the elongation factor P family.

The protein localises to the cytoplasm. It functions in the pathway protein biosynthesis; polypeptide chain elongation. Its function is as follows. Involved in peptide bond synthesis. Stimulates efficient translation and peptide-bond synthesis on native or reconstituted 70S ribosomes in vitro. Probably functions indirectly by altering the affinity of the ribosome for aminoacyl-tRNA, thus increasing their reactivity as acceptors for peptidyl transferase. The polypeptide is Elongation factor P (Rickettsia bellii (strain OSU 85-389)).